A 471-amino-acid polypeptide reads, in one-letter code: MVPKTIIEKIWDEHVVYREDGKPDLLYIDLHLVHEVTSPQAFEGLRQKGRKVRRPDLTFATMDHNVPTINRSVVEDEVAKNQMTALERNCREFGVPLADLNSPEQGIVHVIGPELGLTQPGKTIVCGDSHTSTHGAFGALAFGIGTSEVEHVLATQTLWQHRPKTMQVNVTGSLAPGVSAKDVILAIIGKFGVDFGTGYVLEFTGDVIRRMSMEERMTICNMSIEAGARAGLIAPDDVTFAYLKERKYAPKGEAFEQAVEKWKQLCTDEGAVYDRVVHIDGSEIAPTVTWGTTPAMSSPIDGTVPDPNEFATETERKAVQLALQYMGLKPGTKMTDIAVQHVFIGSCTNSRISDLREAAQIVKGKKVAPGVRALVVPGSQQVKKQAEEEGIAQTFIDAGFEWRDSGCSMCLGMNPDTVPAGEHCASTSNRNFEGRQGKGARTHLVSPAMAAAAAIYGHFVDVRTLYKEVVR.

C347, C407, and C410 together coordinate [4Fe-4S] cluster.

It belongs to the aconitase/IPM isomerase family. LeuC type 1 subfamily. Heterodimer of LeuC and LeuD. It depends on [4Fe-4S] cluster as a cofactor.

It catalyses the reaction (2R,3S)-3-isopropylmalate = (2S)-2-isopropylmalate. It functions in the pathway amino-acid biosynthesis; L-leucine biosynthesis; L-leucine from 3-methyl-2-oxobutanoate: step 2/4. Its function is as follows. Catalyzes the isomerization between 2-isopropylmalate and 3-isopropylmalate, via the formation of 2-isopropylmaleate. The protein is 3-isopropylmalate dehydratase large subunit of Anoxybacillus flavithermus (strain DSM 21510 / WK1).